Reading from the N-terminus, the 161-residue chain is Ribosome maturation factor RimP (161 aa).

Belongs to the RimP family.

It is found in the cytoplasm. Functionally, required for maturation of 30S ribosomal subunits. This is Ribosome maturation factor RimP from Rickettsia africae (strain ESF-5).